A 131-amino-acid polypeptide reads, in one-letter code: MINDLISDGLTRIRNASMRRLDTTKLLHSNVVEATLKILANKSYIESYNVVEEGNKKFINVVLKYDERGRSVINELKRVSKPGRRVYQGRDEIKRFKNGYGTIIVSTSKGVLSNDEAHKAGVGGEVLCTVW.

The protein belongs to the universal ribosomal protein uS8 family. Part of the 30S ribosomal subunit. Contacts proteins S5 and S12.

Functionally, one of the primary rRNA binding proteins, it binds directly to 16S rRNA central domain where it helps coordinate assembly of the platform of the 30S subunit. The protein is Small ribosomal subunit protein uS8 of Campylobacter fetus subsp. fetus (strain 82-40).